We begin with the raw amino-acid sequence, 343 residues long: GTPase Obg (343 aa).

One can recognise an Obg domain in the interval 1–158 (MFIDEAKIRV…FTLRLELKVL (158 aa)). The interval 121–140 (RGGRGNQHFATSTHQAPREH) is disordered. An OBG-type G domain is found at 159-333 (ADIGIVGYPN…LKYAMAERVR (175 aa)). GTP-binding positions include 165–172 (GYPNVGKS), 190–194 (FTTLE), 215–218 (DIPG), 286–289 (SKID), and 314–316 (SAV). The Mg(2+) site is built by Ser172 and Thr192.

The protein belongs to the TRAFAC class OBG-HflX-like GTPase superfamily. OBG GTPase family. In terms of assembly, monomer. Mg(2+) is required as a cofactor.

It is found in the cytoplasm. In terms of biological role, an essential GTPase which binds GTP, GDP and possibly (p)ppGpp with moderate affinity, with high nucleotide exchange rates and a fairly low GTP hydrolysis rate. Plays a role in control of the cell cycle, stress response, ribosome biogenesis and in those bacteria that undergo differentiation, in morphogenesis control. In Acidobacterium capsulatum (strain ATCC 51196 / DSM 11244 / BCRC 80197 / JCM 7670 / NBRC 15755 / NCIMB 13165 / 161), this protein is GTPase Obg.